A 1236-amino-acid chain; its full sequence is ATP-dependent helicase/nuclease subunit A (1236 aa).

One can recognise a UvrD-like helicase ATP-binding domain in the interval 2–457 (AHWTIEQEEA…VDLNKNFRSH (456 aa)). 23–30 (AAAGSGKT) contributes to the ATP binding site. The UvrD-like helicase C-terminal domain occupies 515–816 (NTAKRVEICI…RIMSIHKSKG (302 aa)).

It belongs to the helicase family. AddA subfamily. Heterodimer of AddA and AddB/RexB. It depends on Mg(2+) as a cofactor.

The catalysed reaction is Couples ATP hydrolysis with the unwinding of duplex DNA by translocating in the 3'-5' direction.. It catalyses the reaction ATP + H2O = ADP + phosphate + H(+). Its function is as follows. The heterodimer acts as both an ATP-dependent DNA helicase and an ATP-dependent, dual-direction single-stranded exonuclease. Recognizes the chi site generating a DNA molecule suitable for the initiation of homologous recombination. The AddA nuclease domain is required for chi fragment generation; this subunit has the helicase and 3' -&gt; 5' nuclease activities. The chain is ATP-dependent helicase/nuclease subunit A from Syntrophomonas wolfei subsp. wolfei (strain DSM 2245B / Goettingen).